The chain runs to 408 residues: Homogentisate geranylgeranyltransferase (408 aa).

Residues 1–62 (MQAVTAAAAA…TVMHKFSAIS (62 aa)) constitute a chloroplast transit peptide. The next 9 membrane-spanning stretches (helical) occupy residues 122–142 (HTIFGTIIGITSVSLLPMKSI), 156–176 (ALTAALCMNIYVVGLNQLYDI), 194–214 (SVATGVFLVLAFLIMSFSIGI), 221–241 (LMCALIVSFLLGSAYSIEAPF), 248–268 (ALLAASCILFVRAILVQLAFF), 286–306 (LVFATLFMCCFSAVIALFKDI), 329–349 (VYQLCISILLTAYGAATLVGA), 352–372 (TNLFQKIITVSGHGLLALTLW), and 386–406 (VTSFYMFIWKLFYAEYFLIPF).

Belongs to the UbiA prenyltransferase family. In terms of tissue distribution, expressed in seeds.

It is found in the plastid. Its subcellular location is the chloroplast membrane. The enzyme catalyses homogentisate + (2E,6E,10E)-geranylgeranyl diphosphate + H(+) = 6-geranylgeranyl-2-methylbenzene-1,4-diol + CO2 + diphosphate. The protein operates within cofactor biosynthesis; tocopherol biosynthesis. In terms of biological role, involved in the synthesis of tocotrienol (vitamin E). Catalyzes the condensation of homogentisate and geranylgeranyl diphosphate to form 2-methyl-6-geranylgeranylbenzoquinol. Possesses low activity with phytyl diphosphate as substrate. This chain is Homogentisate geranylgeranyltransferase, found in Hordeum vulgare (Barley).